Consider the following 818-residue polypeptide: Serine/threonine-protein phosphatase 4 regulatory subunit 3 (818 aa).

The region spanning M1–V100 is the WH1 domain. Positions F670–E681 are enriched in acidic residues. A disordered region spans residues F670–S818. The segment covering F703 to L718 has biased composition (basic and acidic residues). The segment covering S729–A775 has biased composition (low complexity). Phosphoserine is present on residues S769 and S770. A compositionally biased stretch (acidic residues) spans Y788 to S803.

It belongs to the SMEK family. In terms of assembly, serine/threonine-protein phosphatase 4 (PP4) occurs in different assemblies of the catalytic and one or more regulatory subunits.

Regulatory subunit of serine/threonine-protein phosphatase 4. The polypeptide is Serine/threonine-protein phosphatase 4 regulatory subunit 3 (smek1) (Danio rerio (Zebrafish)).